A 350-amino-acid polypeptide reads, in one-letter code: Ceramide synthase 1 (350 aa).

An N-acetylalanine modification is found at Ala2. A run of 6 helical transmembrane segments spans residues 53–73, 103–123, 148–168, 176–196, 239–259, and 287–307; these read AHLA…WTAL, AWKF…LFGT, IAAA…ATLY, SVVM…SYAF, AADL…LYWF, and LLLL…AFAA. One can recognise a TLC domain in the interval 97 to 311; it reads AKMPESAWKF…IVAFAAKVLT (215 aa).

In terms of processing, acetylated. Deacetylation by SIRT3 increases enzyme activity and promotes mitochondrial ceramide accumulation.

The protein resides in the endoplasmic reticulum membrane. The enzyme catalyses a sphingoid base + octadecanoyl-CoA = an N-octadecanoyl-sphingoid base + CoA + H(+). It catalyses the reaction sphinganine + octadecanoyl-CoA = N-(octadecanoyl)-sphinganine + CoA + H(+). The catalysed reaction is hexadecasphinganine + octadecanoyl-CoA = N-octadecanoylhexadecasphinganine + CoA + H(+). It carries out the reaction sphing-4-enine + octadecanoyl-CoA = N-octadecanoylsphing-4-enine + CoA + H(+). The enzyme catalyses heptadecasphing-4-enine + octadecanoyl-CoA = N-octadecanoyl-heptadecasphing-4-enine + CoA + H(+). It catalyses the reaction 2-hydroxyoctadecanoyl-CoA + sphinganine = N-(2-hydroxyoctadecanoyl)-sphinganine + CoA + H(+). The catalysed reaction is eicosanoyl-CoA + sphinganine = N-eicosanoylsphinganine + CoA + H(+). The protein operates within lipid metabolism; sphingolipid metabolism. With respect to regulation, inhibited by fumonisin B1. Its function is as follows. Ceramide synthase that catalyzes the transfer of the acyl chain from acyl-CoA to a sphingoid base, with high selectivity toward stearoyl-CoA (octadecanoyl-CoA; C18:0-CoA). N-acylates sphinganine and sphingosine bases to form dihydroceramides and ceramides in de novo synthesis and salvage pathways, respectively. Plays a predominant role in skeletal muscle in regulating C18 ceramide and dihydroceramide levels with an impact on whole-body glucose metabolism and insulin sensitivity. Protects from diet-induced obesity by suppressing the uptake of glucose in multiple organs in a FGF21-dependent way. Generates C18 ceramides in the brain, playing a critical role in cerebellar development and Purkinje cell function. In response to cellular stress mediates mitophagy, a known defense mechanism against cell transformation and aging. Upon mitochondria fission, generates C18 ceramides that anchor lipidated MAP1LC3B/LC3B-II autophagolysosomes to outer mitochondrial membranes to eliminate damaged mitochondria. This is Ceramide synthase 1 from Homo sapiens (Human).